A 574-amino-acid polypeptide reads, in one-letter code: Frizzled-7 (574 aa).

An N-terminal signal peptide occupies residues 1–32 (MRDPGAAAPLSSLGLCALVLALLGALSAGAGA). Residues 33 to 256 (QPYHGEKGIS…EEERRFARLW (224 aa)) lie on the Extracellular side of the membrane. Residues 44-163 (PDHGFCQPIS…HGAGEICVGQ (120 aa)) form the FZ domain. Cystine bridges form between C49/C110, C57/C103, C94/C131, C120/C160, and C124/C148. N63 is a glycosylation site (N-linked (GlcNAc...) asparagine). An N-linked (GlcNAc...) asparagine glycan is attached at N164. A helical transmembrane segment spans residues 257-277 (VGVWSVLCCASTLFTVLTYLV). Residues 278–288 (DMRRFSYPERP) are Cytoplasmic-facing. Residues 289-309 (IIFLSGCYFMVAVAHVAGFLL) traverse the membrane as a helical segment. Over 310 to 336 (EDRAVCVERFSDDGYRTVAQGTKKEGC) the chain is Extracellular. A helical membrane pass occupies residues 337-357 (TILFMVLYFFGMASSIWWVIL). Topologically, residues 358–379 (SLTWFLAAGMKWGHEAIEANSQ) are cytoplasmic. The chain crosses the membrane as a helical span at residues 380-400 (YFHLAAWAVPAVKTITILAMG). Residues 401–423 (QVDGDLLSGVCYVGLSSVDALRG) are Extracellular-facing. A helical membrane pass occupies residues 424–444 (FVLAPLFVYLFIGTSFLLAGF). Residues 445–470 (VSLFRIRTIMKHDGTKTEKLEKLMVR) lie on the Cytoplasmic side of the membrane. A helical transmembrane segment spans residues 471-491 (IGVFSVLYTVPATIVLACYFY). At 492-528 (EQAFREHWERTWLLQTCKSYAVPCPPGHFPPMSPDFT) the chain is on the extracellular side. Residues 529-549 (VFMIKYLMTMIVGITTGFWIW) form a helical membrane-spanning segment. The Cytoplasmic segment spans residues 550 to 574 (SGKTLQSWRRFYHRLSHSSKGETAV). A Lys-Thr-X-X-X-Trp motif, mediates interaction with the PDZ domain of Dvl family members motif is present at residues 552–557 (KTLQSW). The PDZ-binding motif lies at 572–574 (TAV).

Belongs to the G-protein coupled receptor Fz/Smo family. As to quaternary structure, interacts with MAGI3. Interacts with DVL1. Interacts with CCDC88C/DAPLE; the interaction displaces DVL1 from FZD7, leading to inhibition of canonical Wnt signaling and triggering of non-canonical Wnt responses. Interacts with MYOC. Binds to SDCBP; this interaction is increased by inositol trisphosphate (IP3). Interacts with glypican GPC3. In terms of assembly, (Microbial infection) Interacts with C.difficile toxin TcdB; frizzled receptors constitute the major host receptors for TcdB in the colonic epithelium. In terms of processing, ubiquitinated by ZNRF3, leading to its degradation by the proteasome. As to expression, high expression in adult skeletal muscle and fetal kidney, followed by fetal lung, adult heart, brain, and placenta. Specifically expressed in squamous cell esophageal carcinomas.

The protein resides in the cell membrane. It localises to the endosome membrane. Functionally, receptor for Wnt proteins. Most frizzled receptors are coupled to the beta-catenin canonical signaling pathway, which leads to the activation of disheveled proteins, inhibition of GSK-3 kinase, nuclear accumulation of beta-catenin and activation of Wnt target genes. A second signaling pathway involving PKC and calcium fluxes has been seen for some family members, but it is not yet clear if it represents a distinct pathway or if it can be integrated in the canonical pathway, as PKC seems to be required for Wnt-mediated inactivation of GSK-3 kinase. Both pathways seem to involve interactions with G-proteins. Activation by WNT8 induces expression of beta-catenin target genes. Following ligand activation, binds to CCDC88C/DAPLE which displaces DVL1 from FZD7 and leads to inhibition of canonical Wnt signaling, activation of G-proteins by CCDC88C and triggering of non-canonical Wnt responses. May be involved in transduction and intercellular transmission of polarity information during tissue morphogenesis and/or in differentiated tissues. (Microbial infection) Acts as a receptor for C.difficile toxin TcdB in the colonic epithelium. In Homo sapiens (Human), this protein is Frizzled-7 (FZD7).